The following is a 483-amino-acid chain: Glutamyl-tRNA(Gln) amidotransferase subunit A (483 aa).

Catalysis depends on charge relay system residues Lys-76 and Ser-151. Ser-175 functions as the Acyl-ester intermediate in the catalytic mechanism.

It belongs to the amidase family. GatA subfamily. In terms of assembly, heterotrimer of A, B and C subunits.

It catalyses the reaction L-glutamyl-tRNA(Gln) + L-glutamine + ATP + H2O = L-glutaminyl-tRNA(Gln) + L-glutamate + ADP + phosphate + H(+). Allows the formation of correctly charged Gln-tRNA(Gln) through the transamidation of misacylated Glu-tRNA(Gln) in organisms which lack glutaminyl-tRNA synthetase. The reaction takes place in the presence of glutamine and ATP through an activated gamma-phospho-Glu-tRNA(Gln). This chain is Glutamyl-tRNA(Gln) amidotransferase subunit A, found in Pseudomonas putida (strain ATCC 47054 / DSM 6125 / CFBP 8728 / NCIMB 11950 / KT2440).